Here is a 246-residue protein sequence, read N- to C-terminus: Probable phosphatase Tola_0828 (246 aa).

Zn(2+) is bound by residues His8, His10, His16, His41, Glu74, His102, His132, Asp193, and His195.

This sequence belongs to the PHP family. Requires Zn(2+) as cofactor.

This is Probable phosphatase Tola_0828 from Tolumonas auensis (strain DSM 9187 / NBRC 110442 / TA 4).